The chain runs to 244 residues: tRNA (guanine-N(7)-)-methyltransferase (244 aa).

4 residues coordinate S-adenosyl-L-methionine: Glu75, Glu100, Asp127, and Asp150. Asp150 is a catalytic residue. Substrate-binding positions include Lys154, Asp186, and 223–226 (TRFE).

It belongs to the class I-like SAM-binding methyltransferase superfamily. TrmB family.

The catalysed reaction is guanosine(46) in tRNA + S-adenosyl-L-methionine = N(7)-methylguanosine(46) in tRNA + S-adenosyl-L-homocysteine. It functions in the pathway tRNA modification; N(7)-methylguanine-tRNA biosynthesis. Catalyzes the formation of N(7)-methylguanine at position 46 (m7G46) in tRNA. This Xylella fastidiosa (strain 9a5c) protein is tRNA (guanine-N(7)-)-methyltransferase.